We begin with the raw amino-acid sequence, 147 residues long: Transcriptional repressor NrdR (147 aa).

A zinc finger spans residues 3-34 (CLFCRSDDTKVIDSRTSEDGISIRRRRECQLC). In terms of domain architecture, ATP-cone spans 46–136 (LTVIKRNGTS…VYQDFDSLED (91 aa)).

It belongs to the NrdR family. Zn(2+) serves as cofactor.

In terms of biological role, negatively regulates transcription of bacterial ribonucleotide reductase nrd genes and operons by binding to NrdR-boxes. This is Transcriptional repressor NrdR from Tropheryma whipplei (strain TW08/27) (Whipple's bacillus).